Reading from the N-terminus, the 713-residue chain is Nucleolin (713 aa).

Positions 1 to 309 are disordered; the sequence is MVKLAKAGKT…QKIEGSEPTT (309 aa). N6-acetyllysine occurs at positions 9, 15, and 16. The segment covering 24 to 46 has biased composition (acidic residues); the sequence is VEEDSEDEEMSEDEDDSSGEEEV. 4 positions are modified to phosphoserine: serine 28, serine 34, serine 40, and serine 41. The segment covering 56 to 111 has biased composition (low complexity); sequence ATTTPAKKVVVSQTKKAAVPTPAKKAAVTPGKKAAATPAKKAVTPAKVVPTPGKKG. Repeat 1 spans residues 58–65; that stretch reads TTPAKKVV. Residues 58-135 form an 8 X 8 AA tandem repeats of X-T-P-X-K-K-X-X region; it reads TTPAKKVVVS…GAVTPAKGAK (78 aa). Serine 67 is modified (phosphoserine). Threonine 69, threonine 76, threonine 84, and threonine 92 each carry phosphothreonine. 3 consecutive repeat copies span residues 75–82, 83–90, and 91–98. Lysine 96 carries the N6-acetyllysine modification. Threonine 99 bears the Phosphothreonine mark. One copy of the 5; truncated repeat lies at 99–104; that stretch reads TPAKVV. Lysine 102 carries the N6-acetyllysine modification. The stretch at 105–112 is repeat 6; it reads PTPGKKGA. Threonine 106 carries the post-translational modification Phosphothreonine. Lysine 109 and lysine 116 each carry N6-acetyllysine. Repeat copies occupy residues 120 to 127 and 128 to 135. Threonine 121 is subject to Phosphothreonine. N6-acetyllysine is present on lysine 124. Residues serine 145 and serine 157 each carry the phosphoserine modification. Over residues 145–168 the composition is skewed to acidic residues; that stretch reads SDEDEDEEDEDDSDEDEDEEDEFE. Residues 169 to 186 are compositionally biased toward low complexity; the sequence is PPVVKGVKPAKAAPAAPA. 2 positions are modified to phosphoserine: serine 187 and serine 213. Acidic residues predominate over residues 187–218; it reads SEDEDEEDDDDEDDDDDDEEEEEEDDSEEEVM. The residue at position 221 (threonine 221) is a Phosphothreonine. Positions 242–275 are enriched in acidic residues; sequence EEEEDDEDDEDEEEDEDEEDEEDDEDEDEEEEEE. Basic and acidic residues predominate over residues 288–304; the sequence is MTKQKEAPEAKKQKIEG. A Glycyl lysine isopeptide (Lys-Gly) (interchain with G-Cter in SUMO1); alternate cross-link involves residue lysine 301. Lysine 301 participates in a covalent cross-link: Glycyl lysine isopeptide (Lys-Gly) (interchain with G-Cter in SUMO2); alternate. Serine 305 is modified (phosphoserine). RRM domains are found at residues 311 to 387 and 397 to 470; these read FNLF…KPKG and RTLL…YTGE. At lysine 322 the chain carries N6-acetyllysine. Lysine 328 participates in a covalent cross-link: Glycyl lysine isopeptide (Lys-Gly) (interchain with G-Cter in SUMO1); alternate. Lysine 328 participates in a covalent cross-link: Glycyl lysine isopeptide (Lys-Gly) (interchain with G-Cter in SUMO2); alternate. At lysine 352 the chain carries N6-acetyllysine. Serine 360 carries the phosphoserine modification. Threonine 371 carries the phosphothreonine modification. Lysine 374 participates in a covalent cross-link: Glycyl lysine isopeptide (Lys-Gly) (interchain with G-Cter in SUMO2). A Glycyl lysine isopeptide (Lys-Gly) (interchain with G-Cter in SUMO2); alternate cross-link involves residue lysine 381. Lysine 381 carries the N6-acetyllysine; alternate modification. The residue at position 402 (lysine 402) is an N6-acetyllysine. Phosphoserine is present on serine 405. Threonine 409 bears the Phosphothreonine mark. N6-acetyllysine is present on lysine 448. Phosphoserine occurs at positions 462 and 464. N6-acetyllysine occurs at positions 471 and 480. One can recognise an RRM 3 domain in the interval 489 to 563; that stretch reads KTLVLSNLSY…RTIRLELQGP (75 aa). A Glycyl lysine isopeptide (Lys-Gly) (interchain with G-Cter in SUMO2); alternate cross-link involves residue lysine 516. Lysine 516 is subject to N6-acetyllysine; alternate. The residue at position 524 (lysine 524) is an N6-acetyllysine. Phosphoserine is present on serine 566. Lysine 575 is subject to N6-acetyllysine. One can recognise an RRM 4 domain in the interval 575-650; that stretch reads KTLFVKGLSE…NKVTLDWAKP (76 aa). Lysine 580 is covalently cross-linked (Glycyl lysine isopeptide (Lys-Gly) (interchain with G-Cter in SUMO2); alternate). The residue at position 580 (lysine 580) is an N6-acetyllysine; alternate. Phosphoserine is present on serine 583. A Glycyl lysine isopeptide (Lys-Gly) (interchain with G-Cter in SUMO1); alternate cross-link involves residue lysine 592. Lysine 592 is covalently cross-linked (Glycyl lysine isopeptide (Lys-Gly) (interchain with G-Cter in SUMO2); alternate). A phosphoserine mark is found at serine 594 and serine 622. A Glycyl lysine isopeptide (Lys-Gly) (interchain with G-Cter in SUMO2) cross-link involves residue lysine 627. Residues 645–713 form a disordered region; that stretch reads LDWAKPKGEG…KPQGKKTKFE (69 aa). Lysine 649 bears the N6-acetyllysine mark. Gly residues predominate over residues 653-702; the sequence is EGGFGGRGGGRGGFGGRGGGRGGRGGFGGRGRGGFGGRGGFRGGRGGGGD. 9 positions are modified to asymmetric dimethylarginine: arginine 659, arginine 663, arginine 669, arginine 673, arginine 676, arginine 682, arginine 684, arginine 690, and arginine 694. The residue at position 697 (arginine 697) is an Asymmetric dimethylarginine; alternate. Arginine 697 is subject to Omega-N-methylarginine; alternate.

As to quaternary structure, identified in a IGF2BP1-dependent mRNP granule complex containing untranslated mRNAs. Component of the SWAP complex that consists of NPM1, NCL/nucleolin, PARP1 and SWAP70. Component of a complex which is at least composed of HTATSF1/Tat-SF1, the P-TEFb complex components CDK9 and CCNT1, RNA polymerase II, SUPT5H, and NCL/nucleolin. Interacts with AICDA. Interacts with APTX. Interacts with C1QBP. Interacts with ERBB4. Interacts (via C-terminus) with FMR1 isoform 6 (via N-terminus). Interacts with GZF1; this interaction is important for nucleolar localization of GZF1. Interacts with NSUN2. Interacts with NVL. Interacts (via N-terminus domain) with SETX. Interacts (via RRM1 and C-terminal RRM4/Arg/Gly-rich domains) with TERT; the interaction is important for nucleolar localization of TERT. Interacts with WDR46. Interacts with ZFP36. Interacts with LRRC34. Interacts with RRP1B. Interacts with HNRNPU; this interaction occurs during mitosis. Interacts with RIOK1; RIOK1 recruits NCL to PRMT5 for symmetrically methylation. Interacts with ZBTB7B. Interacts with MDK; this interaction promotes NCL clustering and lateral movements of this complex into lipid rafts leading to MDK internalization. Interacts with HDGF. Interacts with ALKBH2. Interacts with IGFBP5; this interaction is necessary for IGFBP5 localization to the nucleus. Interacts with DDX24 (when ubiquitinated); this interaction may be important during ribosome biogenesis. Some glutamate residues are glycylated by TTLL8. This modification occurs exclusively on glutamate residues and results in a glycine chain on the gamma-carboxyl group. Post-translationally, symmetrically methylated by PRMT5.

It is found in the nucleus. It localises to the nucleolus. The protein localises to the cytoplasm. Its function is as follows. Nucleolin is the major nucleolar protein of growing eukaryotic cells. It is found associated with intranucleolar chromatin and pre-ribosomal particles. It induces chromatin decondensation by binding to histone H1. It is thought to play a role in pre-rRNA transcription and ribosome assembly. May play a role in the process of transcriptional elongation. Binds RNA oligonucleotides with 5'-UUAGGG-3' repeats more tightly than the telomeric single-stranded DNA 5'-TTAGGG-3' repeats. The polypeptide is Nucleolin (Ncl) (Rattus norvegicus (Rat)).